The chain runs to 291 residues: 4-hydroxy-tetrahydrodipicolinate synthase (291 aa).

Threonine 45 is a pyruvate binding site. Tyrosine 133 serves as the catalytic Proton donor/acceptor. Residue lysine 161 is the Schiff-base intermediate with substrate of the active site. Position 203 (isoleucine 203) interacts with pyruvate.

The protein belongs to the DapA family. As to quaternary structure, homotetramer; dimer of dimers.

Its subcellular location is the cytoplasm. The enzyme catalyses L-aspartate 4-semialdehyde + pyruvate = (2S,4S)-4-hydroxy-2,3,4,5-tetrahydrodipicolinate + H2O + H(+). The protein operates within amino-acid biosynthesis; L-lysine biosynthesis via DAP pathway; (S)-tetrahydrodipicolinate from L-aspartate: step 3/4. In terms of biological role, catalyzes the condensation of (S)-aspartate-beta-semialdehyde [(S)-ASA] and pyruvate to 4-hydroxy-tetrahydrodipicolinate (HTPA). This chain is 4-hydroxy-tetrahydrodipicolinate synthase, found in Teredinibacter turnerae (strain ATCC 39867 / T7901).